The sequence spans 261 residues: Calbindin (261 aa).

Residue Ala-2 is modified to N-acetylalanine. The tract at residues 2–7 (AESHLQ) is interaction with RANBP9. 5 EF-hand domains span residues 11–46 (ITAS…LQQA), 53–88 (ELSP…EENF), 98–133 (KSCE…LLEK), 142–177 (KLAE…QENF), and 186–221 (MCGK…LCEK). The Ca(2+) site is built by Asp-24, Asp-26, Ser-28, Tyr-30, and Glu-35. The Ca(2+) site is built by Asp-111, Asp-113, Ser-115, Glu-122, Asp-155, Asn-157, Asp-159, Lys-161, Glu-166, Asp-199, Asp-201, Asn-203, Tyr-205, and Glu-210.

The protein belongs to the calbindin family. Interacts with RANBP9.

Its function is as follows. Buffers cytosolic calcium. May stimulate a membrane Ca(2+)-ATPase and a 3',5'-cyclic nucleotide phosphodiesterase. The sequence is that of Calbindin (CALB1) from Homo sapiens (Human).